A 950-amino-acid polypeptide reads, in one-letter code: Sodium/calcium exchanger Calx (950 aa).

The first 22 residues, 1-22 (MQLLLKSIFTCALFVIFVYATA), serve as a signal peptide directing secretion. Over 23 to 120 (QSLLKVQETE…PQRNISVGDR (98 aa)) the chain is Extracellular. Asn39, Asn47, and Asn114 each carry an N-linked (GlcNAc...) asparagine glycan. A helical transmembrane segment spans residues 121–141 (LVRGFVYFVLLIYLFVGVSII). Residues 142–179 (ADRFMAAIEAITSIERAVVVKGPNNTKQVMHVRIWNET) are Cytoplasmic-facing. The chain crosses the membrane as a helical span at residues 180-200 (VANLTLMALGSSAPEILLSVI). Residues 201–216 (EIYAKDFESGDLGPGT) lie on the Extracellular side of the membrane. The chain crosses the membrane as a helical span at residues 217–237 (IVGSAAYNLFMIIAVCMIWIP). At 238–257 (AGEVRRIRHLRVFFVTALFS) the chain is on the cytoplasmic side. A run of 2 helical transmembrane segments spans residues 258 to 278 (VFAY…VILV) and 279 to 299 (WEAI…YIAE). The Cytoplasmic segment spans residues 300-749 (RRLLVYKYMD…NDDEEEEVPS (450 aa)). A corresponds to the exchanger inhibitory peptide (XIP) found in other sodium/calcium exchange proteins and thought to be involved in calmodulin binding region spans residues 301–318 (RLLVYKYMDKNYRVNKRG). Residues 440 to 551 (DPIRMYFEPG…MIATVMILDD (112 aa)) enclose the Calx-beta 1 domain. Ca(2+) contacts are provided by Glu455, Asp490, Asp515, Asp516, Val518, Glu520, Glu523, Asp550, Asp551, and Asp552. The 140-residue stretch at 555-694 (GIFAFTDSVF…LTTAYVRIRE (140 aa)) folds into the Calx-beta 2 domain. A helical membrane pass occupies residues 750 to 770 (CFSYVSHFVCLFWKVLFAFVP). The Extracellular portion of the chain corresponds to 771–775 (PTDIC). A helical transmembrane segment spans residues 776–796 (GGYVTFVVSIFVIGVITAIIG). Topologically, residues 797 to 813 (DAASYFGCALNIKDSVT) are cytoplasmic. Residues 814–834 (AILFVALGTSIPDTFASMIAA) form a helical membrane-spanning segment. Topologically, residues 835–848 (KHDEGADNCIGNVT) are extracellular. Asn846 carries N-linked (GlcNAc...) asparagine glycosylation. Residues 849 to 869 (GSNAVNVFLGIGLAWTIAAVY) form a helical membrane-spanning segment. Over 870–883 (HSSHGMTFNVEPGT) the chain is Cytoplasmic. A helical membrane pass occupies residues 884 to 904 (IGFAVALFCGEALIAIMLIMF). Residues 905–923 (RRWHKGIGAELGGPKVSKY) lie on the Extracellular side of the membrane. A helical membrane pass occupies residues 924–944 (ISAAILVFLWVFYVVICILEA). Topologically, residues 945–950 (YDVIRV) are cytoplasmic.

This sequence belongs to the Ca(2+):cation antiporter (CaCA) (TC 2.A.19) family. SLC8 subfamily. Ubiquitously expressed with higher expression in head compared to body (at protein level). Enriched in photoreceptor cells of the eye (at protein level). In the adult head, expressed in retina, optic ganglia and all neuronal tissues.

The protein localises to the cell membrane. The protein resides in the cell projection. It is found in the rhabdomere membrane. The catalysed reaction is Ca(2+)(in) + 3 Na(+)(out) = Ca(2+)(out) + 3 Na(+)(in). Its activity is regulated as follows. Activated by a Na(+) electrochemical gradient but also undergoes Na(2+)-dependent inactivation. Inhibited by micromolar levels of cytoplasmic Ca(2+), which is the opposite of most characterized mammalian homologs. With respect to regulation, exhibits greater extent of inhibition by Ca(2+) than isoform D/1.2. Exhibits greater Na(2+)-dependent inactivation than isoform A/1.1, probably due to greater stability of the inactive Na(2+)-bound form. Functionally, na(+)/Ca(2+) antiporter that couples the energy of a Na(+) electrochemical gradient to the movement of Ca(2+) against an electrochemical gradient across a membrane, which contributes to the regulation of cytoplasmic Ca(2+) levels. Mediates Na(+)/Ca(2+) exchange in photoreceptor cells and involved in controlling Ca(2+) levels during phototransduction, affecting magnitude of the photoresponse, activation kinetics, signal amplification, response termination, and light adaptation. Light induced depolarization of photoreceptor cells, resulting in Na(+) and Ca(2+) entry through trp/transient receptor potential protein channels, is essential for photoreceptor cell function but may result in toxic levels of cytoplasmic Ca(2+). Na(+)/Ca(2+) antiporter regulation of Ca(2+) levels protects photoreceptor cells from light-dependent retinal degeneration. This chain is Sodium/calcium exchanger Calx, found in Drosophila melanogaster (Fruit fly).